Here is a 387-residue protein sequence, read N- to C-terminus: Flap endonuclease 1 (387 aa).

Positions 1–104 are N-domain; that stretch reads MGILGLSKLI…GELAKRAERR (104 aa). Mg(2+) is bound at residue D34. The DNA site is built by R47 and R70. Mg(2+)-binding residues include D86, E158, E160, D179, and D181. Residues 122–253 form an I-domain region; the sequence is GIEKFNRRLV…KRAIELINNY (132 aa). E158 contacts DNA. The DNA site is built by G231 and D233. D233 is a Mg(2+) binding site. Residues 336–344 form an interaction with PCNA region; the sequence is TQVRLDSFF. Residues 345–387 are disordered; sequence KTLPSTPNATNAAKRKAEEAKKSANNKKAKTSGGGGGRGRRPK.

Belongs to the XPG/RAD2 endonuclease family. FEN1 subfamily. As to quaternary structure, interacts with PCNA. Three molecules of FEN1 bind to one PCNA trimer with each molecule binding to one PCNA monomer. PCNA stimulates the nuclease activity without altering cleavage specificity. Mg(2+) serves as cofactor. Phosphorylated. Phosphorylation upon DNA damage induces relocalization to the nuclear plasma.

The protein resides in the nucleus. The protein localises to the nucleolus. It is found in the nucleoplasm. Its subcellular location is the mitochondrion. Structure-specific nuclease with 5'-flap endonuclease and 5'-3' exonuclease activities involved in DNA replication and repair. During DNA replication, cleaves the 5'-overhanging flap structure that is generated by displacement synthesis when DNA polymerase encounters the 5'-end of a downstream Okazaki fragment. It enters the flap from the 5'-end and then tracks to cleave the flap base, leaving a nick for ligation. Also involved in the long patch base excision repair (LP-BER) pathway, by cleaving within the apurinic/apyrimidinic (AP) site-terminated flap. Acts as a genome stabilization factor that prevents flaps from equilibrating into structures that lead to duplications and deletions. Also possesses 5'-3' exonuclease activity on nicked or gapped double-stranded DNA, and exhibits RNase H activity. Also involved in replication and repair of rDNA and in repairing mitochondrial DNA. This is Flap endonuclease 1 from Drosophila yakuba (Fruit fly).